The following is a 276-amino-acid chain: Sec-independent protein translocase protein TatC (276 aa).

The interval 1-29 (MVSLTSVPPYADATPDTRASSGPAPGRRK) is disordered. 6 consecutive transmembrane segments (helical) span residues 49–69 (GGLV…LVLL), 103–123 (LFLA…AFVT), 136–156 (GFLG…WWVL), 187–207 (LVLA…LNLA), 221–241 (WAVL…DALT), and 242–262 (MVLV…VAVW).

It belongs to the TatC family. In terms of assembly, the Tat system comprises two distinct complexes: a TatABC complex, containing multiple copies of TatA, TatB and TatC subunits, and a separate TatA complex, containing only TatA subunits. Substrates initially bind to the TatABC complex, which probably triggers association of the separate TatA complex to form the active translocon.

The protein localises to the cell membrane. Part of the twin-arginine translocation (Tat) system that transports large folded proteins containing a characteristic twin-arginine motif in their signal peptide across membranes. Together with TatB, TatC is part of a receptor directly interacting with Tat signal peptides. The sequence is that of Sec-independent protein translocase protein TatC from Xylanimonas cellulosilytica (strain DSM 15894 / JCM 12276 / CECT 5975 / KCTC 9989 / LMG 20990 / NBRC 107835 / XIL07).